A 689-amino-acid chain; its full sequence is Glycine--tRNA ligase beta subunit (689 aa).

Belongs to the class-II aminoacyl-tRNA synthetase family. As to quaternary structure, tetramer of two alpha and two beta subunits.

It is found in the cytoplasm. It catalyses the reaction tRNA(Gly) + glycine + ATP = glycyl-tRNA(Gly) + AMP + diphosphate. The chain is Glycine--tRNA ligase beta subunit from Oenococcus oeni (strain ATCC BAA-331 / PSU-1).